A 500-amino-acid polypeptide reads, in one-letter code: Allene oxide synthase 3 (500 aa).

The disordered stretch occupies residues 1–26 (MAPPPVNSGDAAAAATGEKSKLSPSG). Substrate-binding positions include 297-298 (FN), Lys-304, and 365-368 (PVEF). Cys-452 contacts heme.

This sequence belongs to the cytochrome P450 family. Requires heme as cofactor. Not expressed in dark-grown seedlings.

It catalyses the reaction (13S)-hydroperoxy-(9Z,11E,15Z)-octadecatrienoate = (9Z,13S,15Z)-12,13-epoxyoctadeca-9,11,15-trienoate + H2O. It participates in lipid metabolism; oxylipin biosynthesis. Involved in the biosynthesis of jasmonic acid, a growth regulator that is implicated also as a signaling molecule in plant defense. Converts 13-hydroperoxylinolenic acid to 12,13-epoxylinolenic acid. This is Allene oxide synthase 3 (CYP74A3) from Oryza sativa subsp. japonica (Rice).